A 416-amino-acid chain; its full sequence is MMNVPSAAAASSCDDFGYNATPPPPPSLLPIMDQDGGGGSIQRDHHHHHNHQQLGYNLEPSSLALLPPSNAAAAAAHHATIAHASPHDLLQFYPTSHYLAAAGGAGGGGNPYSHFTAAAAAGSTFQSYYQQPPQAAPEYYFPTLVSSAEENMASFAATQLGLNLGYRTYFPPRGGYTYGHHPPRCQAEGCKADLSSAKRYHRRHKVCEHHSKAPVVVTAGGLHQRFCQQCSRFHLLDEFDDAKKSCRKRLADHNRRRRKSKPSDGEHSGEKRRAQANKSAATKDKAGSSSKNAGIGDGFETQLLGGAHMSKDQDQAMDLGEVVKEAVDPKGKASMQQQQQQAHHGIHQQSHQQHGFPFPSSSGSCLFPQSQGAVSSTDTSNIAQVQEPSLAFHQQHHQHSNILQLGQAMFDLDFDH.

Residues 11 to 53 form a disordered region; sequence SSCDDFGYNATPPPPPSLLPIMDQDGGGGSIQRDHHHHHNHQQ. The SBP-type zinc finger occupies 182 to 260; that stretch reads PPRCQAEGCK…ADHNRRRRKS (79 aa). Zn(2+) is bound by residues cysteine 185, cysteine 190, cysteine 207, histidine 210, cysteine 227, cysteine 230, histidine 234, and cysteine 246. Residues 243–259 carry the Bipartite nuclear localization signal motif; sequence KKSCRKRLADHNRRRRK. Residues 250-299 are disordered; it reads LADHNRRRRKSKPSDGEHSGEKRRAQANKSAATKDKAGSSSKNAGIGDGF. Residues 261–273 are compositionally biased toward basic and acidic residues; the sequence is KPSDGEHSGEKRR.

Expressed in stems, leaf sheaths, and young panicles.

Its subcellular location is the nucleus. Probable transcription factor that plays an important role in building the laminar joint between leaf blade and leaf sheath boundary, thereby controlling ligule and auricle development. In Oryza sativa subsp. indica (Rice), this protein is Squamosa promoter-binding-like protein 8 (SPL8).